Consider the following 272-residue polypeptide: MCEHNLLNSGYVGSLLNFTSPEPFYFANLRPNGTQLATLSPALSYTRRDVCSLPWTSSPCASPPQSRAFSGYSQSYLSNSVSISINRHVSDKAAAGEEPNKYYFQDSSRKVEERCRHNQSYPSDASIPSSVNINPAKYEYPNVETSLHGSSLHNQGFELNSNSPTVNDGIKQSVSLSMSLQSSVTPVCNRSSDGLPWCPTQVRSRRKRKPYTKQQIAELENEFLANEFINRQKRKELSDRLNLSDQQVKIWFQNRRMKKKRLVMREQTLSLF.

Positions 204–263 (SRRKRKPYTKQQIAELENEFLANEFINRQKRKELSDRLNLSDQQVKIWFQNRRMKKKRLV) form a DNA-binding region, homeobox.

It belongs to the Abd-B homeobox family.

The protein resides in the nucleus. Sequence-specific transcription factor which is part of a developmental regulatory system that provides cells with specific positional identities on the anterior-posterior axis. In Heterodontus francisci (Horn shark), this protein is Homeobox protein Hox-D12 (HOXD12).